We begin with the raw amino-acid sequence, 38 residues long: Photosystem II reaction center protein L (38 aa).

The helical transmembrane segment at 17 to 37 threads the bilayer; sequence SLFWGLLLIFVLAVLFSNYFF.

Belongs to the PsbL family. As to quaternary structure, PSII is composed of 1 copy each of membrane proteins PsbA, PsbB, PsbC, PsbD, PsbE, PsbF, PsbH, PsbI, PsbJ, PsbK, PsbL, PsbM, PsbT, PsbX, PsbY, PsbZ, Psb30/Ycf12, at least 3 peripheral proteins of the oxygen-evolving complex and a large number of cofactors. It forms dimeric complexes.

It is found in the plastid. Its subcellular location is the chloroplast thylakoid membrane. In terms of biological role, one of the components of the core complex of photosystem II (PSII). PSII is a light-driven water:plastoquinone oxidoreductase that uses light energy to abstract electrons from H(2)O, generating O(2) and a proton gradient subsequently used for ATP formation. It consists of a core antenna complex that captures photons, and an electron transfer chain that converts photonic excitation into a charge separation. This subunit is found at the monomer-monomer interface and is required for correct PSII assembly and/or dimerization. The protein is Photosystem II reaction center protein L of Chaetosphaeridium globosum (Charophycean green alga).